The following is a 93-amino-acid chain: Small ribosomal subunit protein uS19 (93 aa).

It belongs to the universal ribosomal protein uS19 family.

Functionally, protein S19 forms a complex with S13 that binds strongly to the 16S ribosomal RNA. This Thermoanaerobacter pseudethanolicus (strain ATCC 33223 / 39E) (Clostridium thermohydrosulfuricum) protein is Small ribosomal subunit protein uS19.